Here is a 213-residue protein sequence, read N- to C-terminus: FMN-dependent NADH:quinone oxidoreductase (213 aa).

FMN is bound at residue 17 to 19; sequence SSS.

The protein belongs to the azoreductase type 1 family. As to quaternary structure, homodimer. Requires FMN as cofactor.

The enzyme catalyses 2 a quinone + NADH + H(+) = 2 a 1,4-benzosemiquinone + NAD(+). It carries out the reaction N,N-dimethyl-1,4-phenylenediamine + anthranilate + 2 NAD(+) = 2-(4-dimethylaminophenyl)diazenylbenzoate + 2 NADH + 2 H(+). Quinone reductase that provides resistance to thiol-specific stress caused by electrophilic quinones. Its function is as follows. Also exhibits azoreductase activity. Catalyzes the reductive cleavage of the azo bond in aromatic azo compounds to the corresponding amines. This chain is FMN-dependent NADH:quinone oxidoreductase, found in Ruminiclostridium cellulolyticum (strain ATCC 35319 / DSM 5812 / JCM 6584 / H10) (Clostridium cellulolyticum).